Consider the following 142-residue polypeptide: HTH-type transcriptional regulator MntR (142 aa).

Residues 1–63 enclose the HTH dtxR-type domain; sequence MPTPSMEDYI…YEKYRGLVLT (63 aa). Asp-8, Glu-11, His-77, Glu-99, Glu-102, and His-103 together coordinate Mn(2+).

This sequence belongs to the DtxR/MntR family. As to quaternary structure, homodimer.

The protein localises to the cytoplasm. With respect to regulation, DNA binding is strongly activated by Mn(2+). Central regulator of manganese homeostasis. This is HTH-type transcriptional regulator MntR from Bacillus cereus (strain B4264).